A 560-amino-acid polypeptide reads, in one-letter code: Exonuclease subunit 2 (560 aa).

36–43 is an ATP binding site; sequence GRNGGGKS.

It to phage T5 protein D13 and to yeast RAD52. Consists of two subunits: gp46 and gp47.

Functionally, exonuclease that plays a role in viral genome replication, DNA recombination, and host DNA degradation. The protein is Exonuclease subunit 2 (46) of Enterobacteria phage T4 (Bacteriophage T4).